We begin with the raw amino-acid sequence, 88 residues long: Defensin-like protein 267 (88 aa).

Positions 1–23 (MMLSKVVLLALLLSLSCLWVAKA) are cleaved as a signal peptide. Cystine bridges form between C45–C63, C51–C68, and C55–C70.

Belongs to the DEFL family.

The protein localises to the secreted. The protein is Defensin-like protein 267 of Arabidopsis thaliana (Mouse-ear cress).